The following is a 489-amino-acid chain: Rhamnulokinase (489 aa).

13–17 contacts ATP; that stretch reads ASSGR. C68 and C222 are disulfide-bonded. Residues G83 and 236–238 each bind substrate; that span reads HDT. D237 serves as the catalytic Proton acceptor. T259 serves as a coordination point for ATP. N296 is a binding site for substrate. ATP is bound at residue Q304. A disulfide bridge connects residues C353 and C370. G402 lines the ATP pocket. C413 and C417 are disulfide-bonded.

Belongs to the rhamnulokinase family. Mg(2+) is required as a cofactor.

The enzyme catalyses L-rhamnulose + ATP = L-rhamnulose 1-phosphate + ADP + H(+). Its pathway is carbohydrate degradation; L-rhamnose degradation; glycerone phosphate from L-rhamnose: step 2/3. In terms of biological role, involved in the catabolism of L-rhamnose (6-deoxy-L-mannose). Catalyzes the transfer of the gamma-phosphate group from ATP to the 1-hydroxyl group of L-rhamnulose to yield L-rhamnulose 1-phosphate. This is Rhamnulokinase from Salmonella heidelberg (strain SL476).